A 644-amino-acid chain; its full sequence is Chaperone protein DnaK (644 aa).

A Phosphothreonine; by autocatalysis modification is found at Thr199. The interval 605 to 644 (KKSSEGQAAQGQTQSQESTKPVEEGVVDAEFEEVKEEDKK) is disordered. Residues 609 to 623 (EGQAAQGQTQSQEST) are compositionally biased toward polar residues. Residues 629 to 644 (GVVDAEFEEVKEEDKK) are compositionally biased toward acidic residues.

Belongs to the heat shock protein 70 family.

In terms of biological role, acts as a chaperone. The chain is Chaperone protein DnaK from Legionella pneumophila (strain Paris).